Reading from the N-terminus, the 544-residue chain is CTP synthase (544 aa).

The segment at 1-267 is amidoligase domain; that stretch reads MSKFVFVTGG…GDLLVSRLHL (267 aa). Serine 13 contacts CTP. UTP is bound at residue serine 13. 14 to 19 is a binding site for ATP; that stretch reads SVGKGI. Tyrosine 54 is an L-glutamine binding site. Residue aspartate 71 coordinates ATP. Mg(2+) is bound by residues aspartate 71 and glutamate 141. Residues 148 to 150, 188 to 193, and lysine 224 contribute to the CTP site; these read DIE and KTKPTQ. UTP-binding positions include 188 to 193 and lysine 224; that span reads KTKPTQ. A Glutamine amidotransferase type-1 domain is found at 299-534; the sequence is YVELKDAYYS…INAAKKVIRD (236 aa). Glycine 354 serves as a coordination point for L-glutamine. Catalysis depends on cysteine 381, which acts as the Nucleophile; for glutamine hydrolysis. Residues 382-385, glutamate 405, and arginine 462 contribute to the L-glutamine site; that span reads LGMQ. Catalysis depends on residues histidine 507 and glutamate 509.

The protein belongs to the CTP synthase family. As to quaternary structure, homotetramer.

The catalysed reaction is UTP + L-glutamine + ATP + H2O = CTP + L-glutamate + ADP + phosphate + 2 H(+). It catalyses the reaction L-glutamine + H2O = L-glutamate + NH4(+). It carries out the reaction UTP + NH4(+) + ATP = CTP + ADP + phosphate + 2 H(+). It participates in pyrimidine metabolism; CTP biosynthesis via de novo pathway; CTP from UDP: step 2/2. With respect to regulation, allosterically activated by GTP, when glutamine is the substrate; GTP has no effect on the reaction when ammonia is the substrate. The allosteric effector GTP functions by stabilizing the protein conformation that binds the tetrahedral intermediate(s) formed during glutamine hydrolysis. Inhibited by the product CTP, via allosteric rather than competitive inhibition. Functionally, catalyzes the ATP-dependent amination of UTP to CTP with either L-glutamine or ammonia as the source of nitrogen. Regulates intracellular CTP levels through interactions with the four ribonucleotide triphosphates. The polypeptide is CTP synthase (Dehalococcoides mccartyi (strain ATCC BAA-2266 / KCTC 15142 / 195) (Dehalococcoides ethenogenes (strain 195))).